A 282-amino-acid chain; its full sequence is Acyl-CoA-binding domain-containing protein 6 (282 aa).

The segment at 1-31 (MASSFLPAGAITGDSGGELSSGDDSGEVEFP) is disordered. The ACB domain occupies 42 to 127 (LAELFEKAAA…VKKLDPGWNP (86 aa)). Residues 69–73 (YARYK) and K95 contribute to the an acyl-CoA site. Position 106 is a phosphoserine (S106). Y114 contributes to the an acyl-CoA binding site. ANK repeat units follow at residues 191–220 (EGRALLHWACDRGHKELVTVLLQHRADINC) and 224–253 (EGQTALHYASACEFLDIVELLLQSGADPTL).

Monomer. As to expression, detected in placenta and spleen (at protein level). Detected in placenta, umbilical cord blood, CD34-positive hematopoietic progenitor cells and bone marrow.

It is found in the cytoplasm. The protein resides in the nucleus. Its function is as follows. Binds long-chain acyl-coenzyme A molecules with a strong preference for unsaturated C18:1-CoA, lower affinity for unsaturated C20:4-CoA, and very weak affinity for saturated C16:0-CoA. Does not bind fatty acids. Plays a role in protein N-myristoylation. The protein is Acyl-CoA-binding domain-containing protein 6 (ACBD6) of Homo sapiens (Human).